Reading from the N-terminus, the 207-residue chain is MAEYTLPDLDWDYAALEPHISGQINEIHHSKHHATYVKGVNDALSKLEEARANEDHAAIFLNEKNLAFHLGGHVNHSIWWKNLSPDGGDKPTGELAAAIDDAFGSFDRFRAQFSAAANGLQGSGWAVLGYDTLGNRLLTFQLYDQQANVPLGIIPLLQVDMWEHAFYLQYKNVKADYVKAFWNVVNWADVQKRYAAATSKTQGLIFG.

The Mn(2+) site is built by H28, H76, D160, and H164.

It belongs to the iron/manganese superoxide dismutase family. Mn(2+) serves as cofactor.

The enzyme catalyses 2 superoxide + 2 H(+) = H2O2 + O2. In terms of biological role, destroys superoxide anion radicals which are normally produced within the cells and which are toxic to biological systems. The chain is Superoxide dismutase [Mn] (sodA) from Mycobacterium intracellulare (strain ATCC 13950 / DSM 43223 / JCM 6384 / NCTC 13025 / 3600).